The chain runs to 39 residues: Large ribosomal subunit protein bL36 (39 aa).

Belongs to the bacterial ribosomal protein bL36 family.

In Levilactobacillus brevis (strain ATCC 367 / BCRC 12310 / CIP 105137 / JCM 1170 / LMG 11437 / NCIMB 947 / NCTC 947) (Lactobacillus brevis), this protein is Large ribosomal subunit protein bL36.